Consider the following 131-residue polypeptide: Large ribosomal subunit protein bL19 (131 aa).

It belongs to the bacterial ribosomal protein bL19 family.

In terms of biological role, this protein is located at the 30S-50S ribosomal subunit interface and may play a role in the structure and function of the aminoacyl-tRNA binding site. The protein is Large ribosomal subunit protein bL19 of Rhodopseudomonas palustris (strain BisB18).